Consider the following 267-residue polypeptide: MGQKINPFGYRLGITENHRSKWFSDSNKAGERYRDFVLEDDQIRKEMSKDLERAGVSRIVIERTRDRVRVDIHTARPGIVIGRRGAEAERVRAKLEKLTGKQVQLNIFEVKNAALDAQLVAQGIAEQLTNRVTFRRAMRKAQQDAMRAGAKGIRIKLSGRLGGAEMSRSEFYREGRVPLQTLRALIDYGFFEAKTTYGRIGVKVWIYKGDMTESEFEEQQAQQNNRPGRRGGDRRPRRGNRSAAPQAAEAPKAEAPAEAAPAAETKE.

The 69-residue stretch at 43 to 111 (IRKEMSKDLE…QVQLNIFEVK (69 aa)) folds into the KH type-2 domain. The segment at 216–267 (FEEQQAQQNNRPGRRGGDRRPRRGNRSAAPQAAEAPKAEAPAEAAPAAETKE) is disordered. The span at 241-267 (RSAAPQAAEAPKAEAPAEAAPAAETKE) shows a compositional bias: low complexity.

It belongs to the universal ribosomal protein uS3 family. As to quaternary structure, part of the 30S ribosomal subunit. Forms a tight complex with proteins S10 and S14.

Its function is as follows. Binds the lower part of the 30S subunit head. Binds mRNA in the 70S ribosome, positioning it for translation. The polypeptide is Small ribosomal subunit protein uS3 (Bifidobacterium longum (strain DJO10A)).